The chain runs to 96 residues: Small ribosomal subunit protein bS21 (96 aa).

Residues 52–96 (RRARKQARKTAIREGLIAAPKPKARPVSPRRPAAPAPASSPVGAA) form a disordered region. The span at 69–96 (AAPKPKARPVSPRRPAAPAPASSPVGAA) shows a compositional bias: low complexity.

Belongs to the bacterial ribosomal protein bS21 family.

The chain is Small ribosomal subunit protein bS21 from Methylobacterium nodulans (strain LMG 21967 / CNCM I-2342 / ORS 2060).